Consider the following 338-residue polypeptide: Lipoate-protein ligase A (338 aa).

In terms of domain architecture, BPL/LPL catalytic spans 29 to 216 (PATQRVLFLW…AFFAHYGERV (188 aa)). ATP is bound by residues Arg-71, 76-79 (GAVF), and Lys-134. Lys-134 provides a ligand contact to (R)-lipoate.

This sequence belongs to the LplA family. Monomer.

The protein resides in the cytoplasm. The catalysed reaction is L-lysyl-[lipoyl-carrier protein] + (R)-lipoate + ATP = N(6)-[(R)-lipoyl]-L-lysyl-[lipoyl-carrier protein] + AMP + diphosphate + H(+). It functions in the pathway protein modification; protein lipoylation via exogenous pathway; protein N(6)-(lipoyl)lysine from lipoate: step 1/2. Its pathway is protein modification; protein lipoylation via exogenous pathway; protein N(6)-(lipoyl)lysine from lipoate: step 2/2. Catalyzes both the ATP-dependent activation of exogenously supplied lipoate to lipoyl-AMP and the transfer of the activated lipoyl onto the lipoyl domains of lipoate-dependent enzymes. This chain is Lipoate-protein ligase A, found in Shigella boydii serotype 18 (strain CDC 3083-94 / BS512).